The chain runs to 142 residues: Large ribosomal subunit protein uL23 (142 aa).

Lys61 is covalently cross-linked (Glycyl lysine isopeptide (Lys-Gly) (interchain with G-Cter in SUMO)).

Belongs to the universal ribosomal protein uL23 family. As to quaternary structure, component of the large ribosomal subunit (LSU). Mature yeast ribosomes consist of a small (40S) and a large (60S) subunit. The 40S small subunit contains 1 molecule of ribosomal RNA (18S rRNA) and 33 different proteins (encoded by 57 genes). The large 60S subunit contains 3 rRNA molecules (25S, 5.8S and 5S rRNA) and 46 different proteins (encoded by 81 genes). uL23 is associated with the polypeptide exit tunnel.

The protein localises to the cytoplasm. Its function is as follows. Component of the ribosome, a large ribonucleoprotein complex responsible for the synthesis of proteins in the cell. The small ribosomal subunit (SSU) binds messenger RNAs (mRNAs) and translates the encoded message by selecting cognate aminoacyl-transfer RNA (tRNA) molecules. The large subunit (LSU) contains the ribosomal catalytic site termed the peptidyl transferase center (PTC), which catalyzes the formation of peptide bonds, thereby polymerizing the amino acids delivered by tRNAs into a polypeptide chain. The nascent polypeptides leave the ribosome through a tunnel in the LSU and interact with protein factors that function in enzymatic processing, targeting, and the membrane insertion of nascent chains at the exit of the ribosomal tunnel. uL23 is a major component of the universal docking site for these factors at the polypeptide exit tunnel. The chain is Large ribosomal subunit protein uL23 from Saccharomyces cerevisiae (strain ATCC 204508 / S288c) (Baker's yeast).